Reading from the N-terminus, the 337-residue chain is 4-hydroxyproline 2-epimerase (337 aa).

Cysteine 91 functions as the Proton acceptor in the catalytic mechanism. Substrate-binding positions include 92-93, aspartate 252, and 257-258; these read GH and GT.

Belongs to the proline racemase family.

It carries out the reaction trans-4-hydroxy-L-proline = cis-4-hydroxy-D-proline. Catalyzes the epimerization of trans-4-hydroxy-L-proline (t4LHyp) to cis-4-hydroxy-D-proline (c4DHyp). Is likely involved in a degradation pathway that converts t4LHyp to alpha-ketoglutarate. Displays no proline racemase activity. This chain is 4-hydroxyproline 2-epimerase, found in Cereibacter sphaeroides (strain ATCC 17029 / ATH 2.4.9) (Rhodobacter sphaeroides).